The following is a 471-amino-acid chain: 3-isopropylmalate dehydratase large subunit (471 aa).

[4Fe-4S] cluster-binding residues include C351, C414, and C417.

It belongs to the aconitase/IPM isomerase family. LeuC type 1 subfamily. Heterodimer of LeuC and LeuD. The cofactor is [4Fe-4S] cluster.

The enzyme catalyses (2R,3S)-3-isopropylmalate = (2S)-2-isopropylmalate. It participates in amino-acid biosynthesis; L-leucine biosynthesis; L-leucine from 3-methyl-2-oxobutanoate: step 2/4. Catalyzes the isomerization between 2-isopropylmalate and 3-isopropylmalate, via the formation of 2-isopropylmaleate. In Colwellia psychrerythraea (strain 34H / ATCC BAA-681) (Vibrio psychroerythus), this protein is 3-isopropylmalate dehydratase large subunit.